A 167-amino-acid chain; its full sequence is Ribosome maturation factor RimM (167 aa).

Residues 94 to 166 form the PRC barrel domain; it reads TGRAYLHELI…YMVVPRFDEF (73 aa).

This sequence belongs to the RimM family. Binds ribosomal protein uS19.

The protein localises to the cytoplasm. Its function is as follows. An accessory protein needed during the final step in the assembly of 30S ribosomal subunit, possibly for assembly of the head region. Essential for efficient processing of 16S rRNA. May be needed both before and after RbfA during the maturation of 16S rRNA. It has affinity for free ribosomal 30S subunits but not for 70S ribosomes. This Chlorobium phaeobacteroides (strain DSM 266 / SMG 266 / 2430) protein is Ribosome maturation factor RimM.